The following is a 468-amino-acid chain: 3-isopropylmalate dehydratase large subunit (468 aa).

3 residues coordinate [4Fe-4S] cluster: Cys-347, Cys-407, and Cys-410. The segment covering 424 to 441 (SASSSNRNFKGRQGSPSG) has biased composition (polar residues). Residues 424-443 (SASSSNRNFKGRQGSPSGRT) are disordered.

This sequence belongs to the aconitase/IPM isomerase family. LeuC type 1 subfamily. In terms of assembly, heterodimer of LeuC and LeuD. [4Fe-4S] cluster serves as cofactor.

The catalysed reaction is (2R,3S)-3-isopropylmalate = (2S)-2-isopropylmalate. It functions in the pathway amino-acid biosynthesis; L-leucine biosynthesis; L-leucine from 3-methyl-2-oxobutanoate: step 2/4. Functionally, catalyzes the isomerization between 2-isopropylmalate and 3-isopropylmalate, via the formation of 2-isopropylmaleate. This Prochlorococcus marinus (strain MIT 9215) protein is 3-isopropylmalate dehydratase large subunit.